Reading from the N-terminus, the 391-residue chain is Candidapepsin-1 (391 aa).

An N-terminal signal peptide occupies residues 1-18 (MFLKNIFIALAIALLVDA). Residues 19-50 (SPAKRSPGFVTLDFDVIKTPVNATGQEGKVKR) constitute a propeptide, activation peptide. The N-linked (GlcNAc...) asparagine glycan is linked to asparagine 40. Residues 64-377 (YAADITIGSN…DLDDDKISLA (314 aa)) enclose the Peptidase A1 domain. Aspartate 82 is an active-site residue. An intrachain disulfide couples cysteine 97 to cysteine 109. The active site involves aspartate 267. Cysteine 305 and cysteine 343 form a disulfide bridge.

It belongs to the peptidase A1 family. O-glycosylated.

Its subcellular location is the secreted. It catalyses the reaction Preferential cleavage at the carboxyl of hydrophobic amino acids, but fails to cleave 15-Leu-|-Tyr-16, 16-Tyr-|-Leu-17 and 24-Phe-|-Phe-25 of insulin B chain. Activates trypsinogen, and degrades keratin.. This is Candidapepsin-1 (SAP1) from Candida albicans (strain WO-1) (Yeast).